The following is a 306-amino-acid chain: Pantothenate kinase (306 aa).

Gly-91–Ser-98 provides a ligand contact to ATP.

Belongs to the prokaryotic pantothenate kinase family.

The protein resides in the cytoplasm. It carries out the reaction (R)-pantothenate + ATP = (R)-4'-phosphopantothenate + ADP + H(+). Its pathway is cofactor biosynthesis; coenzyme A biosynthesis; CoA from (R)-pantothenate: step 1/5. The sequence is that of Pantothenate kinase from Streptococcus agalactiae serotype Ia (strain ATCC 27591 / A909 / CDC SS700).